The primary structure comprises 134 residues: Small ribosomal subunit protein uS9 (134 aa).

The disordered stretch occupies residues 109–134 (DARRTEPHKPSKSSKGPRAKRQKSYR). Positions 118–134 (PSKSSKGPRAKRQKSYR) are enriched in basic residues.

Belongs to the universal ribosomal protein uS9 family.

The polypeptide is Small ribosomal subunit protein uS9 (Methanococcus maripaludis (strain C5 / ATCC BAA-1333)).